A 103-amino-acid chain; its full sequence is Histone H4.1 (103 aa).

A compositionally biased stretch (gly residues) spans 1–14 (MSGRGKGGKGLGKG). Positions 1–20 (MSGRGKGGKGLGKGGAKRHR) are disordered. Residue Lys6 is modified to N6-acetyl-N6-methyllysine; alternate. N6-methyllysine; alternate occurs at positions 6, 9, and 13. Lys13 bears the N6-acetyl-N6-methyllysine; alternate mark. A DNA-binding region spans residues 17-21 (KRHRK). N6-glutaryllysine is present on Lys92.

The protein belongs to the histone H4 family. As to quaternary structure, the nucleosome is a histone octamer containing two molecules each of H2A, H2B, H3 and H4 assembled in one H3-H4 heterotetramer and two H2A-H2B heterodimers. The octamer wraps approximately 147 bp of DNA. In terms of processing, glutarylation at Lys-92 (H4K91glu) destabilizes nucleosomes by promoting dissociation of the H2A-H2B dimers from nucleosomes.

Its subcellular location is the nucleus. The protein resides in the chromosome. Its function is as follows. Core component of nucleosome. Nucleosomes wrap and compact DNA into chromatin, limiting DNA accessibility to the cellular machineries which require DNA as a template. Histones thereby play a central role in transcription regulation, DNA repair, DNA replication and chromosomal stability. DNA accessibility is regulated via a complex set of post-translational modifications of histones, also called histone code, and nucleosome remodeling. In Eremothecium gossypii (strain ATCC 10895 / CBS 109.51 / FGSC 9923 / NRRL Y-1056) (Yeast), this protein is Histone H4.1 (HHF1).